The sequence spans 220 residues: Probable septum site-determining protein MinC (220 aa).

This sequence belongs to the MinC family. As to quaternary structure, interacts with MinD and FtsZ.

Functionally, cell division inhibitor that blocks the formation of polar Z ring septums. Rapidly oscillates between the poles of the cell to destabilize FtsZ filaments that have formed before they mature into polar Z rings. Prevents FtsZ polymerization. This Photobacterium profundum (strain SS9) protein is Probable septum site-determining protein MinC.